Reading from the N-terminus, the 886-residue chain is MTTLSPEAFAGHTPMMQQYLRIKADHPDTLVFYRMGDFYELFFEDAEKAARLLDLTLTQRGASAGTPIKMAGVPHHAVEQYLAKLVKMGESVAICEQIGDPATSKGPVERKVVRVVTPGTLTDAALLSDKNDVYLLAMCTGHNKRGVAVNIGLAWLNLASGALRLAEIEPDQLGTALERIRPAEILTADGATDAVPAGAGAIKRVPAWHFDIASGTQRLCDQLDVAGLDGFGAHSLTSACGAAGALLLYAAATQGQQLRHVRSLKVENETEYIGLDPATRRNLELTETLRGTESPTLYSLLDTCCTTMGSRLLRHWLHHPPRASVAAQSRQQAIGALLDAPADASLDALRSALRQIADVERITGRLALLSARPRDLSSLRDTFAALPALRERISAIVANADALTRVDAALAPPAECLDLLTSAIAPEPAAMVRDGGVIARGYDAELDELRDISENCGQFLIDLEARERTRTGIANLRVEYNKVHGFYIEVTRGQTDKVPDDYRRRQTLKNAERYITPELKTFEDKALSAQERALARERALYDGVLQALLPFIPECQRVASALAELDVLAAFAERARTLDWVAPTFTDEIGIEIEQGRHPVVEAQVEQFIANDCRFGAERKLLLITGPNMGGKSTFMRQTALIALMAYVGSYVPAKSACFGPIDRIFTRIGAADDLAGGRSTFMVEMTEAAAILNDATPQSLVLMDEIGRGTSTFDGLALAWAIARHLLAQNGCYTLFATHYFELTQLPAEFPQAANVHLSAVEHGHGIVFLHAVNEGPANQSYGLQVAQLAGVPAPVIRAARKHLAYLEQQSATQNTPQLDLFSAPPAAAADELECADAPAVSALPHPALEKLRDIDPDDLKPRDALDLLYELRTLVRSHDADGHA.

ATP is bound at residue 626-633; sequence GPNMGGKS.

It belongs to the DNA mismatch repair MutS family.

This protein is involved in the repair of mismatches in DNA. It is possible that it carries out the mismatch recognition step. This protein has a weak ATPase activity. This chain is DNA mismatch repair protein MutS, found in Burkholderia ambifaria (strain ATCC BAA-244 / DSM 16087 / CCUG 44356 / LMG 19182 / AMMD) (Burkholderia cepacia (strain AMMD)).